Reading from the N-terminus, the 352-residue chain is Cellular tumor antigen p53 (352 aa).

Residues Met1–Phe48 form a transcription activation (acidic) region. A DNA-binding region spans residues Asp87–Thr273. Residues Cys161, His164, Cys220, and Cys224 each coordinate Zn(2+). Residues Arg254–Arg261 are interaction with DNA. Basic and acidic residues predominate over residues Asp262–Gln271. Residues Asp262 to Glu303 form a disordered region. Positions Lys276 to Lys291 match the Bipartite nuclear localization signal motif. Residues Arg302 to Glu331 are oligomerization. Residues Glu316–Leu327 carry the Nuclear export signal motif. The tract at residues Lys330–Asn352 is disordered. Residues Ser334–Lys350 are basic (repression of DNA-binding). Ser351 is subject to Phosphoserine.

It belongs to the p53 family. In terms of assembly, binds DNA as a homotetramer. It depends on Zn(2+) as a cofactor.

The protein localises to the cytoplasm. It localises to the nucleus. In terms of biological role, multifunctional transcription factor that induces cell cycle arrest, DNA repair or apoptosis upon binding to its target DNA sequence. Acts as a tumor suppressor in many tumor types; induces growth arrest or apoptosis depending on the physiological circumstances and cell type. Negatively regulates cell division by controlling expression of a set of genes required for this process. One of the activated genes is an inhibitor of cyclin-dependent kinases. Apoptosis induction seems to be mediated either by stimulation of BAX and FAS antigen expression, or by repression of Bcl-2 expression. This is Cellular tumor antigen p53 (tp53) from Oryzias latipes (Japanese rice fish).